The sequence spans 634 residues: Pentatricopeptide repeat-containing protein At5g14080 (634 aa).

PPR repeat units lie at residues 81–115 (DSIS…KILL), 116–150 (DSSV…GQEI), 151–185 (HPDV…GVSL), 186–220 (NTLG…NLNI), 222–256 (GSII…DCKP), 257–291 (DFMA…GVAP), 292–326 (RSSD…KFPM), 327–360 (DNDI…GKLP), 361–395 (AIRT…GYFS), 396–430 (ELQS…GLAP), 431–465 (DVSL…GCKM), 466–500 (NLTT…GIEP), and 501–535 (DETI…DHKT).

It belongs to the PPR family. P subfamily.

This is Pentatricopeptide repeat-containing protein At5g14080 from Arabidopsis thaliana (Mouse-ear cress).